A 380-amino-acid polypeptide reads, in one-letter code: mRNA cap guanine-N(7) methyltransferase (380 aa).

The mRNA cap 0 methyltransferase domain maps to 24 to 333; it reads SRIFFMRNMN…MYLVFGFRKK (310 aa). Residue 33–34 coordinates mRNA; sequence NN. Lysine 37, alanine 62, aspartate 84, aspartate 117, glutamine 139, and tyrosine 144 together coordinate S-adenosyl-L-methionine. The segment at 336 to 380 is disordered; the sequence is EAEKTEEEPATTKPVAESESEQKEVTESEEKEDQEDCEHQEAQTN.

It belongs to the class I-like SAM-binding methyltransferase superfamily. mRNA cap 0 methyltransferase family.

The protein resides in the nucleus. It catalyses the reaction a 5'-end (5'-triphosphoguanosine)-ribonucleoside in mRNA + S-adenosyl-L-methionine = a 5'-end (N(7)-methyl 5'-triphosphoguanosine)-ribonucleoside in mRNA + S-adenosyl-L-homocysteine. Its function is as follows. mRNA-capping methyltransferase that methylates the N7 position of the added guanosine to the 5'-cap structure of mRNAs. Binds RNA containing 5'-terminal GpppC. In Caenorhabditis elegans, this protein is mRNA cap guanine-N(7) methyltransferase (tag-72).